A 100-amino-acid polypeptide reads, in one-letter code: uncharacterized protein (100 aa).

The protein resides in the mitochondrion. This is an uncharacterized protein from Arabidopsis thaliana (Mouse-ear cress).